We begin with the raw amino-acid sequence, 364 residues long: Chaperone protein DnaJ 1 (364 aa).

A J domain is found at Asp-7–Leu-71. The segment at Gly-124 to Gln-200 adopts a CR-type zinc-finger fold. Zn(2+) is bound by residues Cys-137, Cys-140, Cys-154, Cys-157, Cys-174, Cys-177, Cys-188, and Cys-191. CXXCXGXG motif repeat units lie at residues Cys-137–Gly-144, Cys-154–Gly-161, Cys-174–Gly-181, and Cys-188–Gly-195.

It belongs to the DnaJ family. As to quaternary structure, homodimer. Zn(2+) serves as cofactor.

The protein localises to the cytoplasm. In terms of biological role, participates actively in the response to hyperosmotic and heat shock by preventing the aggregation of stress-denatured proteins and by disaggregating proteins, also in an autonomous, DnaK-independent fashion. Unfolded proteins bind initially to DnaJ; upon interaction with the DnaJ-bound protein, DnaK hydrolyzes its bound ATP, resulting in the formation of a stable complex. GrpE releases ADP from DnaK; ATP binding to DnaK triggers the release of the substrate protein, thus completing the reaction cycle. Several rounds of ATP-dependent interactions between DnaJ, DnaK and GrpE are required for fully efficient folding. Also involved, together with DnaK and GrpE, in the DNA replication of plasmids through activation of initiation proteins. In Aquifex aeolicus (strain VF5), this protein is Chaperone protein DnaJ 1.